Here is a 194-residue protein sequence, read N- to C-terminus: Holliday junction branch migration complex subunit RuvA (194 aa).

The interval 1 to 64 is domain I; that stretch reads MIGRITGLLL…EDVHLLFGFM (64 aa). The interval 65–140 is domain II; that stretch reads TEQERALFRQ…KIDPVAILSE (76 aa). A flexible linker region spans residues 140–143; that stretch reads EAGA. The domain III stretch occupies residues 144–194; it reads AASNVDKDILSALLALGYNGREVNRALEQLSEGVTVSDGIMQSLKFLSKVK.

This sequence belongs to the RuvA family. In terms of assembly, homotetramer. Forms an RuvA(8)-RuvB(12)-Holliday junction (HJ) complex. HJ DNA is sandwiched between 2 RuvA tetramers; dsDNA enters through RuvA and exits via RuvB. An RuvB hexamer assembles on each DNA strand where it exits the tetramer. Each RuvB hexamer is contacted by two RuvA subunits (via domain III) on 2 adjacent RuvB subunits; this complex drives branch migration. In the full resolvosome a probable DNA-RuvA(4)-RuvB(12)-RuvC(2) complex forms which resolves the HJ.

It is found in the cytoplasm. Functionally, the RuvA-RuvB-RuvC complex processes Holliday junction (HJ) DNA during genetic recombination and DNA repair, while the RuvA-RuvB complex plays an important role in the rescue of blocked DNA replication forks via replication fork reversal (RFR). RuvA specifically binds to HJ cruciform DNA, conferring on it an open structure. The RuvB hexamer acts as an ATP-dependent pump, pulling dsDNA into and through the RuvAB complex. HJ branch migration allows RuvC to scan DNA until it finds its consensus sequence, where it cleaves and resolves the cruciform DNA. The polypeptide is Holliday junction branch migration complex subunit RuvA (Nitrosomonas eutropha (strain DSM 101675 / C91 / Nm57)).